The sequence spans 90 residues: Mitochondrial import inner membrane translocase subunit TIM8 (90 aa).

Positions 44–70 match the Twin CX3C motif motif; sequence CFKKCNANKPITSGTLDSSEEQCLTNC. 2 cysteine pairs are disulfide-bonded: Cys44–Cys70 and Cys48–Cys66.

Belongs to the small Tim family. In terms of assembly, heterohexamer; composed of 3 copies of TIM8 and 3 copies of TIM13, named soluble 70 kDa complex. Associates with the TIM22 complex, whose core is composed of TIM22 and TIM54. Interacts with the transmembrane regions of multi-pass transmembrane proteins in transit.

It localises to the mitochondrion inner membrane. Its function is as follows. Mitochondrial intermembrane chaperone that participates in the import and insertion of some multi-pass transmembrane proteins into the mitochondrial inner membrane. Also required for the transfer of beta-barrel precursors from the TOM complex to the sorting and assembly machinery (SAM complex) of the outer membrane. Acts as a chaperone-like protein that protects the hydrophobic precursors from aggregation and guide them through the mitochondrial intermembrane space. The TIM8-TIM13 complex is non essential and only mediates the import of few proteins, while the predominant TIM9-TIM10 70 kDa complex is crucial and mediates the import of much more proteins. In Debaryomyces hansenii (strain ATCC 36239 / CBS 767 / BCRC 21394 / JCM 1990 / NBRC 0083 / IGC 2968) (Yeast), this protein is Mitochondrial import inner membrane translocase subunit TIM8 (TIM8).